The sequence spans 237 residues: Putative N-acetylmannosamine-6-phosphate 2-epimerase (237 aa).

Belongs to the NanE family.

It carries out the reaction an N-acyl-D-glucosamine 6-phosphate = an N-acyl-D-mannosamine 6-phosphate. It functions in the pathway amino-sugar metabolism; N-acetylneuraminate degradation; D-fructose 6-phosphate from N-acetylneuraminate: step 3/5. Its function is as follows. Converts N-acetylmannosamine-6-phosphate (ManNAc-6-P) to N-acetylglucosamine-6-phosphate (GlcNAc-6-P). The sequence is that of Putative N-acetylmannosamine-6-phosphate 2-epimerase from Listeria monocytogenes serotype 4a (strain HCC23).